The chain runs to 199 residues: MNPRKKVDLKLIIVGAIGVGKTSLLHQYVHKTFYEEYQTTLGASILSKIIILGDTTLKLQIWDTGGQERFRSMVSTFYKGSDGCILAFDVTDLESFEALDIWRGDVLAKIVPMEQSYPMVLLGNKIDLADRKVPQEVAQGWCREKDIPYFEVSAKNDINVVQAFEMLASRALSRYQSILENHLTESIKLSPDQSRSRCC.

Residues 15–22 (GAIGVGKT), 34–40 (YEEYQTT), 63–67 (DTGGQ), 124–127 (NKID), and 154–155 (AK) each bind GTP. Short sequence motifs (switch) lie at residues 28–41 (YVHK…QTTL) and 67–82 (QERF…KGSD). Phosphoserine is present on Ser186. S-geranylgeranyl cysteine attachment occurs at residues Cys198 and Cys199.

It belongs to the small GTPase superfamily. Rab family. In terms of tissue distribution, expressed in heart, placenta, lung, skeletal muscle and peripheral blood leukocyte.

Its subcellular location is the late endosome. It localises to the lysosome. The protein resides in the golgi apparatus. It is found in the trans-Golgi network. The protein localises to the cytoplasmic vesicle. Its subcellular location is the phagosome. It localises to the phagosome membrane. Its function is as follows. Controls vesicular trafficking from endosomes to the trans-Golgi network (TGN). Acts as a negative regulator of TLR9 signaling and can suppress TLR9-triggered TNFA, IL6, and IFNB production in macrophages by promoting TLR9 lysosomal degradation. Also negatively regulates TLR4 signaling in macrophages by promoting lysosomal degradation of TLR4. Promotes megakaryocytic differentiation by increasing NF-kappa-B-dependent IL6 production and subsequently enhancing the association of STAT3 with GATA1. Not involved in the regulation of the EGF- and EGFR degradation pathway. This chain is Ras-related protein Rab-7b (RAB7B), found in Homo sapiens (Human).